The following is a 130-amino-acid chain: uncharacterized protein (130 aa).

This is an uncharacterized protein from Sulfolobus islandicus filamentous virus (isolate Iceland/Hveragerdi) (SIFV).